We begin with the raw amino-acid sequence, 316 residues long: MAEQLILKGTLEGHNGWVTSLATSLENPNMLLSGSRDKSLIIWNLTRDETSYGYPKRRLHGHSHIVSDCVISSDGAYALSASWDKTLRLWELSTGTTTRRFVGHTNDVLSVSFSADNRQIVSGSRDRTIKLWNTLGDCKFTITEKGHTEWVSCVRFSPNPQNPVIVSSGWDKLVKVWELSSCKLQTDHIGHTGYINAVTISPDGSLCASGGKDGTTMLWDLNESKHLYSLNANDEIHALVFSPNRYWLCAATSSSIIIFDLEKKSKVDELKPEFQNIGKKSREPECVSLAWSADGQTLFAGYTDNIIRAWGVMSRA.

WD repeat units follow at residues Gly-13–Asn-44, Gly-61–Glu-91, Gly-103–Asn-133, Gly-146–Glu-178, Gly-190–Asp-220, Asn-231–Asp-260, and Ser-281–Gly-311.

The protein belongs to the WD repeat G protein beta family. Ribosomal protein RACK1 subfamily. In terms of assembly, component of the small ribosomal subunit (SSU). Mature N.crassa ribosomes consist of a small (40S) and a large (60S) subunit. The 40S small subunit contains 1 molecule of ribosomal RNA (18S rRNA) and at least 32 different proteins. The large 60S subunit contains 3 rRNA molecules (26S, 5.8S and 5S rRNA) and at least 42 different proteins.

The protein resides in the cytoplasm. Its function is as follows. Component of the ribosome, a large ribonucleoprotein complex responsible for the synthesis of proteins in the cell. The small ribosomal subunit (SSU) binds messenger RNAs (mRNAs) and translates the encoded message by selecting cognate aminoacyl-transfer RNA (tRNA) molecules. The large subunit (LSU) contains the ribosomal catalytic site termed the peptidyl transferase center (PTC), which catalyzes the formation of peptide bonds, thereby polymerizing the amino acids delivered by tRNAs into a polypeptide chain. The nascent polypeptides leave the ribosome through a tunnel in the LSU and interact with protein factors that function in enzymatic processing, targeting, and the membrane insertion of nascent chains at the exit of the ribosomal tunnel. Required to activate general amino acid control under conditions of amino acid limitation in the vegetative growth phase, and for formation of protoperithecia in preparation for the sexual phase of the life cycle of N.crassa. The sequence is that of Small ribosomal subunit protein RACK1 (cpc-2) from Neurospora crassa (strain ATCC 24698 / 74-OR23-1A / CBS 708.71 / DSM 1257 / FGSC 987).